The sequence spans 1155 residues: Cilia- and flagella-associated protein 251 (1155 aa).

Basic and acidic residues-rich tracts occupy residues methionine 1–glutamate 19 and lysine 31–glutamate 59. Disordered regions lie at residues methionine 1–leucine 144 and leucine 167–serine 225. Positions glutamate 60–glutamate 69 are enriched in acidic residues. Residues glutamate 70–alanine 95 show a composition bias toward basic and acidic residues. Residues glutamine 99–glutamate 111 are compositionally biased toward low complexity. 2 stretches are compositionally biased toward polar residues: residues threonine 118 to serine 128 and proline 172 to arginine 182. Positions glycine 201 to valine 220 are enriched in basic and acidic residues. 14 WD repeats span residues proline 341 to tryptophan 383, alanine 391 to glutamate 431, leucine 442 to isoleucine 481, proline 499 to histidine 534, serine 537 to leucine 597, glycine 601 to tyrosine 641, leucine 647 to alanine 684, proline 694 to valine 730, tryptophan 737 to leucine 780, leucine 791 to alanine 831, arginine 837 to valine 883, lysine 889 to isoleucine 927, tyrosine 965 to serine 1005, and glycine 1025 to asparagine 1065.

The protein localises to the cytoplasm. The protein resides in the cytoskeleton. Its subcellular location is the cilium axoneme. It is found in the cell projection. It localises to the cilium. The protein localises to the flagellum. Involved in spermatozoa motility. May also regulate cilium motility through its role in the assembly of the axonemal radial spokes. The protein is Cilia- and flagella-associated protein 251 of Pongo abelii (Sumatran orangutan).